A 979-amino-acid polypeptide reads, in one-letter code: Disks large-associated protein 3 (979 aa).

The span at 1-10 shows a compositional bias: basic and acidic residues; that stretch reads MRGYHGDRGS. Disordered regions lie at residues 1–20, 52–95, 136–169, 182–291, 400–429, and 537–581; these read MRGYHGDRGSHPRPARFADQ, AGLG…MYPG, FHTLPYQRGPAGAGPGPAPGTGTAPEPRSESPSR, AKSH…CLEG, AMGDEESGDSDGSPKTSPKAVARRFTTRRS, and FRKA…RCSS. Phosphoserine is present on Ser-58. Over residues 73–86 the composition is skewed to gly residues; sequence PEGGPAGAGVGGGS. Residues 190–202 show a composition bias toward basic and acidic residues; the sequence is PGKRDYNGPKAEG. Positions 203–218 are enriched in gly residues; sequence RGGSGGDSYPGPGSGG. Basic residues predominate over residues 221-246; it reads TSHHHHHHHHHHHHQSRHGKRSKSKD. Phosphoserine is present on residues Ser-406, Ser-409, Ser-412, and Ser-416. The span at 540-549 shows a compositional bias: pro residues; sequence APPPIPPGSQ. Residues Ser-643 and Ser-645 each carry the phosphoserine modification. 2 disordered regions span residues 741-790 and 908-940; these read EGYP…RASP and EEKKVPPPIPKKPLRGRGVPVKERSLDSVDRQR. Basic and acidic residues-rich tracts occupy residues 769 to 779 and 927 to 940; these read GRRDSWIERGS and PVKERSLDSVDRQR. Phosphoserine occurs at positions 932, 935, and 967.

It belongs to the SAPAP family. Interacts with DLG4/PSD-95.

The protein localises to the cell membrane. It localises to the postsynaptic density. It is found in the synapse. May play a role in the molecular organization of synapses and neuronal cell signaling. Could be an adapter protein linking ion channel to the subsynaptic cytoskeleton. May induce enrichment of PSD-95/SAP90 at the plasma membrane. The chain is Disks large-associated protein 3 (DLGAP3) from Homo sapiens (Human).